The following is a 181-amino-acid chain: NAD(P)H-quinone oxidoreductase subunit I, chloroplastic (181 aa).

4Fe-4S ferredoxin-type domains lie at 52–81 and 92–121; these read GRIH…VDWE and KSYS…MTEE. The [4Fe-4S] cluster site is built by Cys-61, Cys-64, Cys-67, Cys-71, Cys-101, Cys-104, Cys-107, and Cys-111.

It belongs to the complex I 23 kDa subunit family. NDH is composed of at least 16 different subunits, 5 of which are encoded in the nucleus. Requires [4Fe-4S] cluster as cofactor.

The protein resides in the plastid. It localises to the chloroplast thylakoid membrane. The catalysed reaction is a plastoquinone + NADH + (n+1) H(+)(in) = a plastoquinol + NAD(+) + n H(+)(out). It catalyses the reaction a plastoquinone + NADPH + (n+1) H(+)(in) = a plastoquinol + NADP(+) + n H(+)(out). Its function is as follows. NDH shuttles electrons from NAD(P)H:plastoquinone, via FMN and iron-sulfur (Fe-S) centers, to quinones in the photosynthetic chain and possibly in a chloroplast respiratory chain. The immediate electron acceptor for the enzyme in this species is believed to be plastoquinone. Couples the redox reaction to proton translocation, and thus conserves the redox energy in a proton gradient. This chain is NAD(P)H-quinone oxidoreductase subunit I, chloroplastic, found in Staurastrum punctulatum (Green alga).